The sequence spans 234 residues: Multicopy suppressor of SEC21 protein 28 (234 aa).

The Cytoplasmic portion of the chain corresponds to 1-47; that stretch reads MQTPPESTDVKLDTLNEPSAHLIEKNVALPKDIFRSYLSYWIYEIAR. At Thr3 the chain carries Phosphothreonine. Residues 48–68 form a helical membrane-spanning segment; it reads YTPVMILSLVIGVLVLLIIFF. The Extracellular segment spans residues 69–72; that stretch reads NDNE. A helical membrane pass occupies residues 73–93; that stretch reads ACVFNSAIFAFTSLVGLLIIL. Residues 94 to 234 are Cytoplasmic-facing; the sequence is SDGNPKLVSR…NIDALLKKTE (141 aa). The COPI binding stretch occupies residues 231 to 234; the sequence is KKTE.

The protein belongs to the DUP/COS family. In terms of assembly, interacts with MST27. Binds to coatomer proteins of COPI and SEC23/SEC24 of COPII coated vesicles.

The protein localises to the endoplasmic reticulum. Its subcellular location is the golgi apparatus. It is found in the cytoplasmic vesicle. It localises to the COPI-coated vesicle membrane. The protein resides in the COPII-coated vesicle membrane. Functionally, involved in protein trafficking vesicle formation, probably by stabilizing of coatomer at the Golgi membrane and thus allowing the efficient formation of COPI coated vesicles. The polypeptide is Multicopy suppressor of SEC21 protein 28 (MST28) (Saccharomyces cerevisiae (strain ATCC 204508 / S288c) (Baker's yeast)).